The sequence spans 3637 residues: Replicase polyprotein 1ab (3637 aa).

The C4-type; atypical zinc finger occupies 8 to 28; it reads CLCTPNARVFWERGQVYCTRC. Residues 69–181 enclose the Peptidase C31 domain; that stretch reads ECRPGGMCWL…KGLCPFADAR (113 aa). The tract at residues 69-183 is PCP1-alpha; it reads ECRPGGMCWL…LCPFADARAN (115 aa). Residues Cys76 and His147 each act as for Nsp1-alpha papain-like cysteine proteinase activity in the active site. The interval 262–380 is PCP1-beta; the sequence is RDTKFSKCWE…KFRFQTRKYY (119 aa). The 120-residue stretch at 262–381 folds into the Peptidase C32 domain; that stretch reads RDTKFSKCWE…FRFQTRKYYG (120 aa). Active-site for Nsp1-beta papain-like cysteine proteinase activity residues include Cys269 and His340. In terms of domain architecture, Peptidase C33 spans 381-486; sequence GYSPPGDGAC…RGVCGECEMG (106 aa). Active-site for Nsp2 cysteine proteinase activity residues include Cys390 and His456. Disordered stretches follow at residues 676-743 and 865-899; these read CKPK…AALK and QQKTSGGCGEREFKDVGRKSGAERTPSKRDLGVSL. Positions 678-689 are enriched in basic residues; the sequence is PKRKRSRKKKTR. Basic and acidic residues-rich tracts occupy residues 714–727 and 873–895; these read DTRETCASEKKAEK and GEREFKDVGRKSGAERTPSKRDL. Helical transmembrane passes span 940–960, 981–1001, 1083–1103, 1287–1307, 1362–1382, 1390–1410, and 1423–1443; these read WLNHQVFVLSSHLLAVWSFIF, VLLCFYLPAIGFMTLVGCVFG, FYFLRLMVLLDLGLVFLAVAL, IADFVCLGLYVLLNFLLSAWL, ALMVAIMATVAIFFAKISLLV, CLLMYAFPSLSIAAFGFPFVL, and VQFFLLAVNVWAGVASVVVLI. The interval 979–1103 is HD1; it reads CCVLLCFYLP…LGLVFLAVAL (125 aa). The interval 1287-1446 is HD2; it reads IADFVCLGLY…ASVVVLISSW (160 aa). One can recognise a Peptidase S32 domain in the interval 1511–1712; that stretch reads GSLRTRGCAK…AVVESLPALE (202 aa). Active-site charge relay system; for 3C-like serine proteinase activity residues include His1549, Asp1574, and Ser1626. The next 5 membrane-spanning stretches (helical) occupy residues 1735–1755, 1761–1781, 1801–1821, 1824–1844, and 1853–1873; these read DVPVIRIAFFFLNEILPVMLA, FALSLFFCVHWLFCSSVAVAF, LVIAALNRPCGPFGFSLLGQL, CCLMLCLLDIELQLLGCLYLG, and EIFFHPTGQFMFLPLFLSLFK. Positions 1735 to 1872 are HD3; that stretch reads DVPVIRIAFF…MFLPLFLSLF (138 aa). A NiRAN domain is found at 2214 to 2372; sequence SLNGLQQASA…LPYKLHPVRG (159 aa). Residues 2611–2745 form the RdRp catalytic domain; the sequence is GRCLEADLAS…YDESSELPNY (135 aa). Residues 2865-2928 enclose the AV ZBD domain; it reads KKKCRTCAHC…SPVMSLNTEL (64 aa). Zn(2+)-binding residues include Cys2871, Cys2874, Cys2884, Cys2889, His2892, His2894, His2896, His2898, Cys2905, His2907, Cys2914, and Cys2917. The (+)RNA virus helicase ATP-binding domain maps to 2985–3137; it reads QVMKVAQTCA…AFALMLGRQL (153 aa). 3013–3020 is an ATP binding site; that stretch reads GAPGTGKT. Residues 3138–3269 form the (+)RNA virus helicase C-terminal domain; that stretch reads IEVFRFGPSI…CGEQPMMISE (132 aa). The AV-Nsp11N/CoV-Nsp15M domain maps to 3293–3389; that stretch reads EGTASPLPQV…LTKFLKGKPV (97 aa). The region spanning 3391–3513 is the NendoU domain; sequence LPDSLMSTGR…MVWKDATAYF (123 aa). Catalysis depends on residues His3422, His3437, and Lys3466.

The protein belongs to the arteriviridae polyprotein family. In terms of processing, specific enzymatic cleavages in vivo by its own proteases yield mature proteins. There are two alternative pathways for processing. Either nsp4-5 is cleaved, which represents the major pathway or the nsp5-6 and nsp6-7 are processed, which represents the minor pathway. The major pathway occurs when nsp2 acts as a cofactor for nsp4.

Its subcellular location is the host membrane. The protein localises to the host cytoplasm. The protein resides in the host perinuclear region. The enzyme catalyses RNA(n) + a ribonucleoside 5'-triphosphate = RNA(n+1) + diphosphate. It carries out the reaction ATP + H2O = ADP + phosphate + H(+). The catalysed reaction is uridylyl-uridylyl-ribonucleotide-RNA = a 3'-end uridylyl-2',3'-cyclophospho-uridine-RNA + a 5'-end dephospho-ribonucleoside-RNA. The replicase polyprotein 1ab is a multifunctional protein: it contains the activities necessary for the transcription of negative stranded RNA, leader RNA, subgenomic mRNAs and progeny virion RNA as well as proteinases responsible for the cleavage of the polyprotein into functional products. Its function is as follows. The Nsp1 chain is essential for viral subgenomic mRNA synthesis. Functionally, the 3C-like serine proteinase chain is responsible for the majority of cleavages as it cleaves the C-terminus of the polyprotein. In terms of biological role, the helicase chain, which contains a zinc finger structure, displays RNA and DNA duplex-unwinding activities with 5' to 3' polarity. Plays a role in viral transcription/replication and prevents the simultaneous activation of host cell dsRNA sensors, such as MDA5/IFIH1, OAS, and PKR. Acts by degrading the 5'-polyuridines generated during replication of the poly(A) region of viral genomic and subgenomic RNAs. Catalyzes a two-step reaction in which a 2'3'-cyclic phosphate (2'3'-cP) is first generated by 2'-O transesterification, which is then hydrolyzed to a 3'-phosphate (3'-P). If not degraded, poly(U) RNA would hybridize with poly(A) RNA tails and activate host dsRNA sensors. The chain is Replicase polyprotein 1ab (rep) from Mus musculus domesticus (western European house mouse).